A 750-amino-acid chain; its full sequence is Glycerophosphodiester phosphodiesterase GDPDL7 (750 aa).

The signal sequence occupies residues 1-17; that stretch reads MLRFIIFFSLFIHLCVA. 2 consecutive GP-PDE domains span residues 41–339 and 355–654; these read PAVV…SQSI and ALVI…TRYL. 4 N-linked (GlcNAc...) asparagine glycosylation sites follow: N134, N304, N603, and N716.

The protein belongs to the glycerophosphoryl diester phosphodiesterase family. As to expression, expressed in flowers and siliques.

The enzyme catalyses a sn-glycero-3-phosphodiester + H2O = an alcohol + sn-glycerol 3-phosphate + H(+). The sequence is that of Glycerophosphodiester phosphodiesterase GDPDL7 from Arabidopsis thaliana (Mouse-ear cress).